Consider the following 309-residue polypeptide: MSALSSENINGVYIPSALLIFGTFIVKKEFVPYAVALTAILAGLKLFTGGSKPRKVLNPTEFQEFVLKEKTDISHNVCIYRFALPRPADILGLPIGQHISLAATIEGQPKEVVRSYTPISSDNEAGYFDLLVKAYPQGNISKYLTTLKIGDTMKVRGPKGAMVYTPNMCRHIGMIAGGTGITPMLQIIKAVIRNRPRNGGNDTTKLDLIFANVNPDDILLKEELDKLAAEDPDFNIYYVLNNPPQGWTGGVGFVTPEMIKEHLPAPASDVKILLCGPPPMISAMKKATESLGYTKARPVSKLEDQVFCF.

Residues 30–50 (FVPYAVALTAILAGLKLFTGG) traverse the membrane as a helical segment. Residues 60-165 (TEFQEFVLKE…RGPKGAMVYT (106 aa)) enclose the FAD-binding FR-type domain. FAD-binding positions include 145 to 160 (TTLK…GPKG) and 171 to 208 (HIGM…KLDL).

The protein belongs to the flavoprotein pyridine nucleotide cytochrome reductase family. As to quaternary structure, monomer. Component of the 2-(3-amino-3-carboxypropyl)histidine synthase complex composed of dph1, dph2, dph3 and a NADH-dependent reductase, predominantly cbr1. FAD is required as a cofactor.

Its subcellular location is the mitochondrion outer membrane. It carries out the reaction 2 Fe(III)-[cytochrome b5] + NADH = 2 Fe(II)-[cytochrome b5] + NAD(+) + H(+). The enzyme catalyses 2 Fe(3+)-[Dph3] + NADH = 2 Fe(2+)-[Dph3] + NAD(+) + H(+). Its pathway is protein modification; peptidyl-diphthamide biosynthesis. In terms of biological role, NADH-dependent reductase for dph3 and cytochrome b5. Required for the first step of diphthamide biosynthesis, a post-translational modification of histidine which occurs in elongation factor 2. Dph1 and dph2 transfer a 3-amino-3-carboxypropyl (ACP) group from S-adenosyl-L-methionine (SAM) to a histidine residue, the reaction is assisted by a reduction system comprising dph3 and a NADH-dependent reductase, predominantly cbr1. By reducing dph3, also involved in the formation of the tRNA wobble base modification mcm5s 2U (5-methoxycarbonylmethyl-2-thiouridine), mediated by the elongator complex. The cytochrome b5/NADH cytochrome b5 reductase electron transfer system supports the catalytic activity of several sterol biosynthetic enzymes. This Neosartorya fischeri (strain ATCC 1020 / DSM 3700 / CBS 544.65 / FGSC A1164 / JCM 1740 / NRRL 181 / WB 181) (Aspergillus fischerianus) protein is NADH-cytochrome b5 reductase 1 (cbr1).